Reading from the N-terminus, the 155-residue chain is MAKRFGYSFQNFDPKRMARASARDLRISPKLAVEVCRELRGMMLNDALRYLDDVIALKRPVPLKRYNDSQGHKPGKGFGPGRYPVKVAKAIKKVLLNVKNNAVQKGLDPDKLKIIHIAAHKGPVLRGWYPRAFGRATPFNEQTTHIEVVVEEIRR.

It belongs to the universal ribosomal protein uL22 family. Part of the 50S ribosomal subunit.

Functionally, this protein binds specifically to 23S rRNA. It makes multiple contacts with different domains of the 23S rRNA in the assembled 50S subunit and ribosome. The globular domain of the protein is located near the polypeptide exit tunnel on the outside of the subunit, while an extended beta-hairpin is found that lines the wall of the exit tunnel in the center of the 70S ribosome. This is Large ribosomal subunit protein uL22 from Pyrococcus furiosus (strain ATCC 43587 / DSM 3638 / JCM 8422 / Vc1).